The chain runs to 503 residues: Lysine--tRNA ligase (503 aa).

The Mg(2+) site is built by glutamate 414 and glutamate 421.

Belongs to the class-II aminoacyl-tRNA synthetase family. In terms of assembly, homodimer. Mg(2+) is required as a cofactor.

Its subcellular location is the cytoplasm. The enzyme catalyses tRNA(Lys) + L-lysine + ATP = L-lysyl-tRNA(Lys) + AMP + diphosphate. This chain is Lysine--tRNA ligase, found in Neisseria gonorrhoeae (strain ATCC 700825 / FA 1090).